A 131-amino-acid chain; its full sequence is Profilin-1 (131 aa).

Belongs to the profilin family. In terms of assembly, occurs in many kinds of cells as a complex with monomeric actin in a 1:1 ratio.

The protein resides in the cytoplasm. It is found in the cytoskeleton. Its function is as follows. Binds to actin and affects the structure of the cytoskeleton. At high concentrations, profilin prevents the polymerization of actin, whereas it enhances it at low concentrations. By binding to PIP2, it inhibits the formation of IP3 and DG. The protein is Profilin-1 of Ambrosia artemisiifolia (Common ragweed).